Reading from the N-terminus, the 178-residue chain is ATP synthase subunit b, chloroplastic (178 aa).

A helical transmembrane segment spans residues 23–43; the sequence is IFETNIINLAAVVAIVISFVG.

The protein belongs to the ATPase B chain family. F-type ATPases have 2 components, F(1) - the catalytic core - and F(0) - the membrane proton channel. F(1) has five subunits: alpha(3), beta(3), gamma(1), delta(1), epsilon(1). F(0) has four main subunits: a(1), b(1), b'(1) and c(10-14). The alpha and beta chains form an alternating ring which encloses part of the gamma chain. F(1) is attached to F(0) by a central stalk formed by the gamma and epsilon chains, while a peripheral stalk is formed by the delta, b and b' chains.

Its subcellular location is the plastid. The protein localises to the chloroplast thylakoid membrane. Functionally, f(1)F(0) ATP synthase produces ATP from ADP in the presence of a proton or sodium gradient. F-type ATPases consist of two structural domains, F(1) containing the extramembraneous catalytic core and F(0) containing the membrane proton channel, linked together by a central stalk and a peripheral stalk. During catalysis, ATP synthesis in the catalytic domain of F(1) is coupled via a rotary mechanism of the central stalk subunits to proton translocation. In terms of biological role, component of the F(0) channel, it forms part of the peripheral stalk, linking F(1) to F(0). The chain is ATP synthase subunit b, chloroplastic from Tetradesmus obliquus (Green alga).